The primary structure comprises 251 residues: Small ribosomal subunit protein uS2 (251 aa).

The protein belongs to the universal ribosomal protein uS2 family.

The protein is Small ribosomal subunit protein uS2 of Nitrosomonas eutropha (strain DSM 101675 / C91 / Nm57).